The primary structure comprises 294 residues: ATP synthase gamma chain (294 aa).

This sequence belongs to the ATPase gamma chain family. In terms of assembly, F-type ATPases have 2 components, CF(1) - the catalytic core - and CF(0) - the membrane proton channel. CF(1) has five subunits: alpha(3), beta(3), gamma(1), delta(1), epsilon(1). CF(0) has three main subunits: a, b and c.

The protein localises to the cell inner membrane. Produces ATP from ADP in the presence of a proton gradient across the membrane. The gamma chain is believed to be important in regulating ATPase activity and the flow of protons through the CF(0) complex. The protein is ATP synthase gamma chain of Campylobacter jejuni subsp. jejuni serotype O:6 (strain 81116 / NCTC 11828).